The chain runs to 155 residues: NADPH-dependent 7-cyano-7-deazaguanine reductase (155 aa).

Residue C53 is the Thioimide intermediate of the active site. The Proton donor role is filled by D60. Residues 75–77 and 94–95 each bind substrate; these read VES and HE.

This sequence belongs to the GTP cyclohydrolase I family. QueF type 1 subfamily.

The protein resides in the cytoplasm. The enzyme catalyses 7-aminomethyl-7-carbaguanine + 2 NADP(+) = 7-cyano-7-deazaguanine + 2 NADPH + 3 H(+). The protein operates within tRNA modification; tRNA-queuosine biosynthesis. Catalyzes the NADPH-dependent reduction of 7-cyano-7-deazaguanine (preQ0) to 7-aminomethyl-7-deazaguanine (preQ1). This chain is NADPH-dependent 7-cyano-7-deazaguanine reductase, found in Brucella abortus (strain S19).